The sequence spans 148 residues: Ribonuclease 4 (148 aa).

A signal peptide spans 1 to 29 (MMDLQRTQSLLLLLVLTLLGLGLVQPSYG). Glutamine 30 carries the post-translational modification Pyrrolidone carboxylic acid. DUMP contacts are provided by arginine 36, histidine 41, lysine 69, asparagine 72, and threonine 73. The Proton acceptor role is filled by histidine 41. Cystine bridges form between cysteine 54–cysteine 110, cysteine 68–cysteine 121, cysteine 86–cysteine 136, and cysteine 93–cysteine 100. Residue histidine 145 is the Proton donor of the active site. Phenylalanine 146 is a binding site for dUMP.

It belongs to the pancreatic ribonuclease family. Expressed in the cortical tubules of the kidney (at protein level). Also expressed in the medullary tubules of the kidney.

The protein localises to the secreted. Its function is as follows. Cleaves preferentially after uridine bases. Has antimicrobial activity against uropathogenic E.coli (UPEC). Probably contributes to urinary tract sterility. The sequence is that of Ribonuclease 4 (Rnase4) from Mus musculus (Mouse).